An 89-amino-acid chain; its full sequence is Small ribosomal subunit protein uS15 (89 aa).

It belongs to the universal ribosomal protein uS15 family. As to quaternary structure, part of the 30S ribosomal subunit. Forms a bridge to the 50S subunit in the 70S ribosome, contacting the 23S rRNA.

In terms of biological role, one of the primary rRNA binding proteins, it binds directly to 16S rRNA where it helps nucleate assembly of the platform of the 30S subunit by binding and bridging several RNA helices of the 16S rRNA. Forms an intersubunit bridge (bridge B4) with the 23S rRNA of the 50S subunit in the ribosome. The polypeptide is Small ribosomal subunit protein uS15 (Polynucleobacter asymbioticus (strain DSM 18221 / CIP 109841 / QLW-P1DMWA-1) (Polynucleobacter necessarius subsp. asymbioticus)).